The chain runs to 855 residues: MAPRVVIPLDQNWEFRQADKPDSKFLPVSQFPTNVHLDLQHHGLIPDPFIGKNELLVQWVGEAQWTYRTVFAAPPVPEGARAVIAFDGLDTFATVVLNGTTILESDNMFLPHRVEVTSVLKAEGNELVITFDSAYLRGCKLVEQHPNHKWGCWNGDVSRLAVRKAQYHWGWDWGPTLLTCGPWRPVHLEIYESRLSDLYAETVVDKSLKRASVKVTAVAERRADRVRFDIALDGQQVATETAELDATSGEATVSFLIDSPALWYPVRYGKQPLYDIRATLLAGDDEVDTLSKRIGLRRAELIQRPLEGQPGTSFFFEVNNIRIYCGGSDWIPADNFIPRISRRRYYDWVRLVAEGNQFMIRVWGGGIYEEQAFYDACDELGILVWQDFMFGCGNYPAWPALLESIRREATENVKRLRHHPSIVIWAGNNEDYQYQESEGLTYDYANKDAESWLKTDFPARYIYEKILADVCADLVPSTPYHPGSPWGAGLNTHDATVGDIHQWNVWHGTQEKWQNFDRLVGRFVSEFGMQAFPAVKTIDAYLPLGRDDPDRYPQSSTVDFHNKAEGHERRIALYLVENLRYAPDPLEHFVYCTQLMQGECLASAYRLWKREWRGPGREYCGGALVWQTNDCWPVTSWSIVDYYLRPKLAYFTVKREMAPVSIGITRRTHLHPRDRHTRVNVDVKTQIEVWASNLTLEDLTVDCVLKAWDVESGEETFSETVAAALLLRENRSTEIAALDVPVRQKNVGEEGRIVVAAYLVDKEGRQMARYVNWPEPLKYVHLQKPRALRAQLTADYSAVEVSAEVPVKGVALECEDDGVRFDDNLVDIVPGEVVTIGVSGAGKDTKIETRYLGMI.

The N-linked (GlcNAc...) asparagine glycan is linked to asparagine 98. The active-site Proton donor is glutamate 430. Asparagine 693 and asparagine 730 each carry an N-linked (GlcNAc...) asparagine glycan.

Belongs to the glycosyl hydrolase 2 family. Beta-mannosidase B subfamily. In terms of assembly, homodimer.

It localises to the secreted. It catalyses the reaction Hydrolysis of terminal, non-reducing beta-D-mannose residues in beta-D-mannosides.. Its pathway is glycan metabolism; N-glycan degradation. Functionally, exoglycosidase that cleaves the single beta-linked mannose residue from the non-reducing end of beta-mannosidic oligosaccharides of various complexity and length. Prefers mannobiose over mannotriose. Is also severely restricted by galactosyl substitutions at the +1 subsite. Has no activity against polymeric mannan. The polypeptide is Beta-mannosidase B (man9) (Thermothelomyces thermophilus (Myceliophthora thermophila)).